The primary structure comprises 455 residues: Putative O-acetyltransferase SAT14 (455 aa).

The protein belongs to the lysine N-acyltransferase MbtK family.

It participates in mycotoxin biosynthesis. Putative O-acetyltransferase; part of the satratoxin SC2 cluster involved in the biosynthesis of satratoxins, trichothecene mycotoxins that are associated with human food poisonings. Satratoxins are suggested to be made by products of multiple gene clusters (SC1, SC2 and SC3) that encode 21 proteins in all, including polyketide synthases, acetyltransferases, and other enzymes expected to modify the trichothecene skeleton. SC1 encodes 10 proteins, SAT1 to SAT10. The largest are SAT8, which encodes a putative polyketide synthase (PKS) with a conventional non-reducing architecture, and SAT10, a putative protein containing four ankyrin repeats and thus may be involved in protein scaffolding. The putative short-chain reductase SAT3 may assist the PKS in some capacity. SAT6 contains a secretory lipase domain and acts probably as a trichothecene esterase. SAT5 encodes a putative acetyltransferase, and so, with SAT6, may affect endogenous protection from toxicity. The probable transcription factor SAT9 may regulate the expression of the SC1 cluster. SC2 encodes proteins SAT11 to SAT16, the largest of which encodes the putative reducing PKS SAT13. SAT11 is a cytochrome P450 monooxygenase, while SAT14 and SAT16 are probable acetyltransferases. The SC2 cluster may be regulated by the transcription factor SAT15. SC3 is a small cluster that encodes 5 proteins, SAT17 to SAT21. SAT21 is a putative MFS-type transporter which may have a role in exporting secondary metabolites. The four other proteins putatively encoded in SC3 include the taurine hydroxylase-like protein SAT17, the O-methyltransferase SAT18, the acetyltransferase SAT19, and the Cys6-type zinc finger SAT20, the latter being probably involved in regulation of SC3 expression. The polypeptide is Putative O-acetyltransferase SAT14 (Stachybotrys chartarum (strain CBS 109288 / IBT 7711) (Toxic black mold)).